The sequence spans 200 residues: Prolactin-2 (200 aa).

A signal peptide spans Met-1–Ala-23. Cystine bridges form between Cys-64-Cys-173 and Cys-190-Cys-200.

It belongs to the somatotropin/prolactin family.

The protein localises to the secreted. This Oreochromis mossambicus (Mozambique tilapia) protein is Prolactin-2 (prl2).